The primary structure comprises 551 residues: Endolytic murein transglycosylase (551 aa).

Topologically, residues M1–K187 are cytoplasmic. The segment at V38–K180 is disordered. 2 stretches are compositionally biased toward low complexity: residues P100 to R110 and Q145 to T157. Over residues D159–K174 the composition is skewed to basic and acidic residues. A helical transmembrane segment spans residues A188–Y208. Over Q209–N551 the chain is Extracellular.

Belongs to the transglycosylase MltG family. As to quaternary structure, interacts with RodZ. Interacts with MreC in the elongasome; interaction is strongly reduced when the 90 C-terminal residues of MreC are missing. Interacts with KhpB (also called EloR/Jag) via MltG's N-terminus, suggesting the N-terminus of MltG is cytoplasmic.

It localises to the cell membrane. It carries out the reaction a peptidoglycan chain = a peptidoglycan chain with N-acetyl-1,6-anhydromuramyl-[peptide] at the reducing end + a peptidoglycan chain with N-acetylglucosamine at the non-reducing end.. Its function is as follows. Functions as a peptidoglycan terminase that cleaves nascent peptidoglycan strands endolytically to terminate their elongation. In terms of biological role, mutations in this gene suppress deletion of PBP2b (penA); truncation at residue 168, undefined changes between residue Ile-447 and Ala-505, and mutation of Ala-505 suppress the penA deletion. Probably part of the elongasome which synthesizes peripheral peptidoglycan. In Streptococcus pneumoniae (strain ATCC BAA-255 / R6), this protein is Endolytic murein transglycosylase.